A 136-amino-acid polypeptide reads, in one-letter code: Large ribosomal subunit protein uL16 (136 aa).

This sequence belongs to the universal ribosomal protein uL16 family. As to quaternary structure, part of the 50S ribosomal subunit.

Functionally, binds 23S rRNA and is also seen to make contacts with the A and possibly P site tRNAs. This chain is Large ribosomal subunit protein uL16, found in Pectobacterium atrosepticum (strain SCRI 1043 / ATCC BAA-672) (Erwinia carotovora subsp. atroseptica).